A 465-amino-acid polypeptide reads, in one-letter code: CUGBP Elav-like family member 3 (465 aa).

RRM domains follow at residues 7–88 (IKLF…PADS) and 95–175 (RKLF…FADT). A compositionally biased stretch (pro residues) spans 346–359 (PPALVAQQPPPPPQ). The interval 346 to 379 (PPALVAQQPPPPPQQQQQQQQQQQQQQQREGPDG) is disordered. Low complexity predominate over residues 360–373 (QQQQQQQQQQQQQQ). The 79-residue stretch at 380 to 458 (CNIFIYHLPQ…KRLKVQLKRP (79 aa)) folds into the RRM 3 domain.

The protein belongs to the CELF/BRUNOL family. Expressed in brain.

It localises to the nucleus. Its subcellular location is the cytoplasm. In terms of biological role, RNA-binding protein involved in the regulation of pre-mRNA alternative splicing. Mediates exon inclusion and/or exclusion in pre-mRNA that are subject to tissue-specific and developmentally regulated alternative splicing. Specifically activates exon 5 inclusion of cardiac isoforms of TNNT2 during heart remodeling at the juvenile to adult transition. Activates the splicing of MAPT/Tau exon 10. Binds to muscle-specific splicing enhancer (MSE) intronic sites flanking the alternative exon 5 of TNNT2 pre-mRNA. The protein is CUGBP Elav-like family member 3 (CELF3) of Homo sapiens (Human).